The primary structure comprises 172 residues: Ribosome maturation factor RimM (172 aa).

The PRC barrel domain maps to 94–167; it reads ENEFYLFQLK…FIKVELLPGM (74 aa).

Belongs to the RimM family. In terms of assembly, binds ribosomal protein uS19.

The protein resides in the cytoplasm. Its function is as follows. An accessory protein needed during the final step in the assembly of 30S ribosomal subunit, possibly for assembly of the head region. Essential for efficient processing of 16S rRNA. May be needed both before and after RbfA during the maturation of 16S rRNA. It has affinity for free ribosomal 30S subunits but not for 70S ribosomes. This chain is Ribosome maturation factor RimM, found in Carboxydothermus hydrogenoformans (strain ATCC BAA-161 / DSM 6008 / Z-2901).